Consider the following 221-residue polypeptide: Ependymin (221 aa).

The N-terminal stretch at 1 to 21 (MQAFAVAALSIWLCLGATTLA) is a signal peptide. N-linked (GlcNAc...) asparagine glycans are attached at residues Asn-37, Asn-77, and Asn-101.

It belongs to the ependymin family. As to quaternary structure, forms disulfide-linked dimers. In terms of processing, binds calcium through the terminal sialic acids. EPDs are synthesized in the meninx and secreted in the cerebrospinal fluid.

It localises to the secreted. May play a role in neural plasticity. May be involved during axon regeneration. In Esox lucius (Northern pike), this protein is Ependymin (epd).